The primary structure comprises 346 residues: MARLKVGIVFGGSSEEHAVSVKSAQEVARNLDTEKYQPFFVGITKDGAWRLCDGPGQDWENGDCRPVVLSPDRSVHGLLVLEQGQYRSVRLDVVLPVLHGTLGEDGATQGLLELSGIPYVGCDVQSSALCMDKSLAYVVARSAGIATPDFWTVTGDETIDPGRLTYPVFVKPARSGSSFGVSKVCRPEDLATAVESARRYDTKVLIEAAVVGSEVGCAILGNDPDLIVGEVDRIALSHGFFRIHQEEQPENGSENSTPVVPADIPTEKRSLVQETAKAVYRALGCRGLSRVDMFLKEDGEVVLNEVNTLPGMTSYSRYPRMMAAAGLPLSEVIDRTLSLALTGKLR.

Residues Tyr137–Ser338 form the ATP-grasp domain. Arg163–Gly216 lines the ATP pocket. 3 residues coordinate Mg(2+): Asp292, Glu305, and Asn307.

It belongs to the D-alanine--D-alanine ligase family. Requires Mg(2+) as cofactor. The cofactor is Mn(2+).

The protein localises to the cell membrane. In terms of biological role, required for resistance to glycopeptides antibiotics. D-Ala--D-Ala ligase of altered specificity which catalyzes ester bond formation between D-Ala and various D-hydroxy acids; producing a peptidoglycan which does not terminate by D-alanine but by D-lactate, thus preventing vancomycin binding. This Streptomyces coelicolor (strain ATCC BAA-471 / A3(2) / M145) protein is Putative D-alanine--D-lactate ligase.